A 480-amino-acid chain; its full sequence is Cobyric acid synthase (480 aa).

One can recognise a GATase cobBQ-type domain in the interval 249-436 (KLKVVVPVLT…LHGFLDSEAA (188 aa)). C330 serves as the catalytic Nucleophile. Residue H428 is part of the active site.

This sequence belongs to the CobB/CobQ family. CobQ subfamily.

It participates in cofactor biosynthesis; adenosylcobalamin biosynthesis. Functionally, catalyzes amidations at positions B, D, E, and G on adenosylcobyrinic A,C-diamide. NH(2) groups are provided by glutamine, and one molecule of ATP is hydrogenolyzed for each amidation. In Vibrio vulnificus (strain YJ016), this protein is Cobyric acid synthase.